The sequence spans 236 residues: Mediator of RNA polymerase II transcription subunit 11 (236 aa).

Composition is skewed to basic and acidic residues over residues 136–152 (IEKN…KEAV) and 168–186 (EETK…DIKQ). The interval 136 to 236 (IEKNAEEDKT…NVDDLFEDIL (101 aa)) is disordered. Over residues 226-236 (SNVDDLFEDIL) the composition is skewed to acidic residues.

Belongs to the Mediator complex subunit 11 family. As to quaternary structure, component of the Mediator complex.

Its subcellular location is the nucleus. Functionally, component of the Mediator complex, a coactivator involved in the regulated transcription of nearly all RNA polymerase II-dependent genes. Mediator functions as a bridge to convey information from gene-specific regulatory proteins to the basal RNA polymerase II transcription machinery. Mediator is recruited to promoters by direct interactions with regulatory proteins and serves as a scaffold for the assembly of a functional pre-initiation complex with RNA polymerase II and the general transcription factors. The protein is Mediator of RNA polymerase II transcription subunit 11 (MED11) of Scheffersomyces stipitis (strain ATCC 58785 / CBS 6054 / NBRC 10063 / NRRL Y-11545) (Yeast).